Here is a 929-residue protein sequence, read N- to C-terminus: Isoleucine--tRNA ligase (929 aa).

Positions 58–68 match the 'HIGH' region motif; it reads PYANGDIHIGH. Glu-563 is an L-isoleucyl-5'-AMP binding site. The 'KMSKS' region signature appears at 605-609; the sequence is KMSKS. Lys-608 serves as a coordination point for ATP. Zn(2+) is bound by residues Cys-892, Cys-895, Cys-912, and Cys-915.

Belongs to the class-I aminoacyl-tRNA synthetase family. IleS type 1 subfamily. In terms of assembly, monomer. Zn(2+) serves as cofactor.

It is found in the cytoplasm. The enzyme catalyses tRNA(Ile) + L-isoleucine + ATP = L-isoleucyl-tRNA(Ile) + AMP + diphosphate. Its function is as follows. Catalyzes the attachment of isoleucine to tRNA(Ile). As IleRS can inadvertently accommodate and process structurally similar amino acids such as valine, to avoid such errors it has two additional distinct tRNA(Ile)-dependent editing activities. One activity is designated as 'pretransfer' editing and involves the hydrolysis of activated Val-AMP. The other activity is designated 'posttransfer' editing and involves deacylation of mischarged Val-tRNA(Ile). This is Isoleucine--tRNA ligase from Neisseria gonorrhoeae (strain NCCP11945).